Here is a 284-residue protein sequence, read N- to C-terminus: Malonyl-[acyl-carrier protein] O-methyltransferase (284 aa).

The protein belongs to the methyltransferase superfamily.

It carries out the reaction malonyl-[ACP] + S-adenosyl-L-methionine = malonyl-[ACP] methyl ester + S-adenosyl-L-homocysteine. Its pathway is cofactor biosynthesis; biotin biosynthesis. Functionally, converts the free carboxyl group of a malonyl-thioester to its methyl ester by transfer of a methyl group from S-adenosyl-L-methionine (SAM). It allows to synthesize pimeloyl-ACP via the fatty acid synthetic pathway. The protein is Malonyl-[acyl-carrier protein] O-methyltransferase of Legionella pneumophila subsp. pneumophila (strain Philadelphia 1 / ATCC 33152 / DSM 7513).